Reading from the N-terminus, the 502-residue chain is Type-2 serine--tRNA ligase (502 aa).

Ala-304 contacts L-serine. Zn(2+) is bound at residue Cys-306. Position 336 (Arg-336) interacts with L-serine. Residues 336–338 (RYE) and 347–348 (RV) contribute to the ATP site. L-serine contacts are provided by residues 353 to 355 (RVE) and Gln-400. Glu-355 contributes to the Zn(2+) binding site. Glu-432 is an ATP binding site. An L-serine-binding site is contributed by Asn-435. Cys-461 lines the Zn(2+) pocket. Arg-468 lines the ATP pocket.

The protein belongs to the class-II aminoacyl-tRNA synthetase family. Type-2 seryl-tRNA synthetase subfamily. In terms of assembly, homodimer. The cofactor is Zn(2+).

The protein localises to the cytoplasm. The enzyme catalyses tRNA(Ser) + L-serine + ATP = L-seryl-tRNA(Ser) + AMP + diphosphate + H(+). It carries out the reaction tRNA(Sec) + L-serine + ATP = L-seryl-tRNA(Sec) + AMP + diphosphate + H(+). It participates in aminoacyl-tRNA biosynthesis; selenocysteinyl-tRNA(Sec) biosynthesis; L-seryl-tRNA(Sec) from L-serine and tRNA(Sec): step 1/1. Functionally, catalyzes the attachment of serine to tRNA(Ser). Is also able to aminoacylate tRNA(Sec) with serine, to form the misacylated tRNA L-seryl-tRNA(Sec), which will be further converted into selenocysteinyl-tRNA(Sec). This Methanococcoides burtonii (strain DSM 6242 / NBRC 107633 / OCM 468 / ACE-M) protein is Type-2 serine--tRNA ligase.